The sequence spans 105 residues: uncharacterized protein (105 aa).

It localises to the cytoplasm. The protein localises to the nucleus. This is an uncharacterized protein from Schizosaccharomyces pombe (strain 972 / ATCC 24843) (Fission yeast).